Reading from the N-terminus, the 577-residue chain is Arginine--tRNA ligase (577 aa).

Residues 122–132 (PNVAKEMHVGH) carry the 'HIGH' region motif.

This sequence belongs to the class-I aminoacyl-tRNA synthetase family. Monomer.

The protein resides in the cytoplasm. It carries out the reaction tRNA(Arg) + L-arginine + ATP = L-arginyl-tRNA(Arg) + AMP + diphosphate. The chain is Arginine--tRNA ligase from Escherichia coli O139:H28 (strain E24377A / ETEC).